A 57-amino-acid chain; its full sequence is uncharacterized protein (57 aa).

Residues 1 to 57 (MANHRGGSGNFAEDRERASEAGKKGGQHSGGNFKNDPQRASEAGKKGGKSSHGKSDN) form a disordered region. 2 stretches are compositionally biased toward basic and acidic residues: residues 12–23 (AEDRERASEAGK) and 36–45 (DPQRASEAGK). The segment covering 46–57 (KGGKSSHGKSDN) has biased composition (basic residues).

This sequence belongs to the con-10 family.

This is an uncharacterized protein from Escherichia coli (strain K12).